Consider the following 185-residue polypeptide: Threonylcarbamoyl-AMP synthase (185 aa).

The 185-residue stretch at 1 to 185 (MKNLNQVVDA…AKTGNTLRQG (185 aa)) folds into the YrdC-like domain.

It belongs to the SUA5 family. TsaC subfamily.

The protein resides in the cytoplasm. It catalyses the reaction L-threonine + hydrogencarbonate + ATP = L-threonylcarbamoyladenylate + diphosphate + H2O. In terms of biological role, required for the formation of a threonylcarbamoyl group on adenosine at position 37 (t(6)A37) in tRNAs that read codons beginning with adenine. Catalyzes the conversion of L-threonine, HCO(3)(-)/CO(2) and ATP to give threonylcarbamoyl-AMP (TC-AMP) as the acyladenylate intermediate, with the release of diphosphate. The polypeptide is Threonylcarbamoyl-AMP synthase (Aliivibrio fischeri (strain ATCC 700601 / ES114) (Vibrio fischeri)).